The chain runs to 161 residues: NADH-quinone oxidoreductase subunit I (161 aa).

4Fe-4S ferredoxin-type domains are found at residues 52–82 (LRRY…IESS) and 92–121 (TRYD…QGPN). Residues Cys62, Cys65, Cys68, Cys72, Cys101, Cys104, Cys107, and Cys111 each coordinate [4Fe-4S] cluster.

The protein belongs to the complex I 23 kDa subunit family. In terms of assembly, NDH-1 is composed of 14 different subunits. Subunits NuoA, H, J, K, L, M, N constitute the membrane sector of the complex. It depends on [4Fe-4S] cluster as a cofactor.

The protein resides in the cell inner membrane. The catalysed reaction is a quinone + NADH + 5 H(+)(in) = a quinol + NAD(+) + 4 H(+)(out). Its function is as follows. NDH-1 shuttles electrons from NADH, via FMN and iron-sulfur (Fe-S) centers, to quinones in the respiratory chain. The immediate electron acceptor for the enzyme in this species is believed to be ubiquinone. Couples the redox reaction to proton translocation (for every two electrons transferred, four hydrogen ions are translocated across the cytoplasmic membrane), and thus conserves the redox energy in a proton gradient. The polypeptide is NADH-quinone oxidoreductase subunit I (Pelagibacter ubique (strain HTCC1062)).